The primary structure comprises 897 residues: Putative POM121-like protein 1-like (897 aa).

Residues 1–19 show a composition bias toward basic and acidic residues; the sequence is MPEQDKDPRVQENPDDQRT. 10 disordered regions span residues 1–177, 211–252, 266–302, 315–348, 362–469, 484–522, 536–612, 642–741, 753–793, and 812–856; these read MPEQ…LPPP, IPDC…PKSQ, EVPS…RDTA, ASRD…GSLL, ATAA…ASRP, DCRP…RPKS, AEVP…LPPS, AQRS…ASRP, AISD…DRPK, and STAP…APFT. The segment covering 54–65 has biased composition (polar residues); the sequence is LHAQSSEIRYNH. Residues 66–76 show a composition bias toward low complexity; the sequence is TSQTSWTSSST. Composition is skewed to polar residues over residues 77–89, 103–114, and 219–228; these read KRNA…SSTG, SRCQLTLSYSKT, and PSHTLSSLAT. 4 stretches are compositionally biased toward polar residues: residues 376 to 385, 417 to 430, 490 to 499, and 556 to 579; these read NQRSQTSRTR, SHCQ…NTVS, PSHTLSSLAT, and FSSS…TSLI. Positions 599–612 are enriched in low complexity; it reads TSAPAAAAAALPPS. Composition is skewed to polar residues over residues 650–676, 689–702, 762–771, and 828–849; these read NQRS…STEG, SHCQ…NTVS, PSHTLSSLAT, and FSSS…QDTS. A helical transmembrane segment spans residues 877 to 897; sequence LGLFLLVFSFFFLLTWASFSF.

The protein belongs to the POM121 family.

The protein localises to the membrane. The polypeptide is Putative POM121-like protein 1-like (Homo sapiens (Human)).